The primary structure comprises 196 residues: Imidazole glycerol phosphate synthase subunit HisH (196 aa).

The 195-residue stretch at 2 to 196 (NVVILDTGCA…AKLLKNFLEM (195 aa)) folds into the Glutamine amidotransferase type-1 domain. Catalysis depends on Cys-77, which acts as the Nucleophile. Catalysis depends on residues His-178 and Glu-180.

In terms of assembly, heterodimer of HisH and HisF.

It is found in the cytoplasm. It catalyses the reaction 5-[(5-phospho-1-deoxy-D-ribulos-1-ylimino)methylamino]-1-(5-phospho-beta-D-ribosyl)imidazole-4-carboxamide + L-glutamine = D-erythro-1-(imidazol-4-yl)glycerol 3-phosphate + 5-amino-1-(5-phospho-beta-D-ribosyl)imidazole-4-carboxamide + L-glutamate + H(+). The enzyme catalyses L-glutamine + H2O = L-glutamate + NH4(+). Its pathway is amino-acid biosynthesis; L-histidine biosynthesis; L-histidine from 5-phospho-alpha-D-ribose 1-diphosphate: step 5/9. Functionally, IGPS catalyzes the conversion of PRFAR and glutamine to IGP, AICAR and glutamate. The HisH subunit catalyzes the hydrolysis of glutamine to glutamate and ammonia as part of the synthesis of IGP and AICAR. The resulting ammonia molecule is channeled to the active site of HisF. The protein is Imidazole glycerol phosphate synthase subunit HisH of Shigella flexneri.